The primary structure comprises 257 residues: tRNA (guanine-N(1)-)-methyltransferase (257 aa).

Residues Gly113 and Ile133–Leu138 contribute to the S-adenosyl-L-methionine site.

Belongs to the RNA methyltransferase TrmD family. Homodimer.

It is found in the cytoplasm. The enzyme catalyses guanosine(37) in tRNA + S-adenosyl-L-methionine = N(1)-methylguanosine(37) in tRNA + S-adenosyl-L-homocysteine + H(+). Its function is as follows. Specifically methylates guanosine-37 in various tRNAs. The chain is tRNA (guanine-N(1)-)-methyltransferase from Cronobacter sakazakii (strain ATCC BAA-894) (Enterobacter sakazakii).